The primary structure comprises 240 residues: Enoyl-CoA delta isomerase 1, peroxisomal (240 aa).

Positions 238-240 (SKL) match the Microbody targeting signal motif.

The protein belongs to the enoyl-CoA hydratase/isomerase family.

It localises to the peroxisome. It catalyses the reaction a (3Z)-enoyl-CoA = a 4-saturated (2E)-enoyl-CoA. The enzyme catalyses a (3E)-enoyl-CoA = a 4-saturated (2E)-enoyl-CoA. The protein operates within lipid metabolism; fatty acid beta-oxidation. In terms of biological role, able to isomerize both 3-cis and 3-trans double bonds into the 2-trans form in a range of enoyl-CoA species. Essential for the beta oxidation of unsaturated fatty acids. The sequence is that of Enoyl-CoA delta isomerase 1, peroxisomal from Arabidopsis thaliana (Mouse-ear cress).